The chain runs to 39 residues: Natriuretic peptide TcNPa (39 aa).

Residues 1–8 (SGSETAKI) constitute a propeptide that is removed on maturation. Cys12 and Cys28 are disulfide-bonded. O-linked (GalNAc...) threonine glycosylation occurs at Thr35.

The protein belongs to the natriuretic peptide family. O-linked glycans consist of galactosyl-beta(1-3)-N-acetylgalactosamine (Gal-GalNAc). In terms of processing, the synthetic non-glycosylated form shows higher potency on natriuretic receptors (EC(50)=672.90 nM) and NPR2 (EC(50)=261.0 nM). In terms of tissue distribution, expressed by the venom gland.

The protein resides in the secreted. Functionally, snake venom natriuretic peptide that targets both NPR1 (EC(50)=1080.0 nM) and NPR2 (EC(50)=328.60 nM). Exhibits hypotensive and vasodepressor activities. The protein is Natriuretic peptide TcNPa of Tropidechis carinatus (Australian rough-scaled snake).